The following is a 356-amino-acid chain: tRNA N6-adenosine threonylcarbamoyltransferase (356 aa).

The Fe cation site is built by H115 and H119. Residues 138-142 (LVSGG), D171, G184, and N283 contribute to the substrate site. D311 is a Fe cation binding site.

Belongs to the KAE1 / TsaD family. It depends on Fe(2+) as a cofactor.

The protein localises to the cytoplasm. It catalyses the reaction L-threonylcarbamoyladenylate + adenosine(37) in tRNA = N(6)-L-threonylcarbamoyladenosine(37) in tRNA + AMP + H(+). In terms of biological role, required for the formation of a threonylcarbamoyl group on adenosine at position 37 (t(6)A37) in tRNAs that read codons beginning with adenine. Is involved in the transfer of the threonylcarbamoyl moiety of threonylcarbamoyl-AMP (TC-AMP) to the N6 group of A37, together with TsaE and TsaB. TsaD likely plays a direct catalytic role in this reaction. This is tRNA N6-adenosine threonylcarbamoyltransferase from Prochlorococcus marinus (strain SARG / CCMP1375 / SS120).